The primary structure comprises 129 residues: Small ribosomal subunit protein uS11 (129 aa).

This sequence belongs to the universal ribosomal protein uS11 family. Part of the 30S ribosomal subunit. Interacts with proteins S7 and S18. Binds to IF-3.

Located on the platform of the 30S subunit, it bridges several disparate RNA helices of the 16S rRNA. Forms part of the Shine-Dalgarno cleft in the 70S ribosome. This is Small ribosomal subunit protein uS11 from Carboxydothermus hydrogenoformans (strain ATCC BAA-161 / DSM 6008 / Z-2901).